The sequence spans 381 residues: Alkanesulfonate monooxygenase (381 aa).

This sequence belongs to the SsuD family. Homotetramer.

It carries out the reaction an alkanesulfonate + FMNH2 + O2 = an aldehyde + FMN + sulfite + H2O + 2 H(+). Its function is as follows. Catalyzes the desulfonation of aliphatic sulfonates. This Escherichia coli O81 (strain ED1a) protein is Alkanesulfonate monooxygenase.